Reading from the N-terminus, the 212-residue chain is uncharacterized protein (212 aa).

Residues glycine 53, glutamate 74, and aspartate 97 each coordinate S-adenosyl-L-methionine.

It belongs to the methyltransferase superfamily. YrrT family.

In terms of biological role, could be a S-adenosyl-L-methionine-dependent methyltransferase. This is an uncharacterized protein from Bacillus thuringiensis (strain Al Hakam).